Here is a 100-residue protein sequence, read N- to C-terminus: MRSLSMTIMFMHPSTPLQLLLHPPVLLLAYLSPRIPLLEDFEGGFLSRRFALPQNDVYNQKKNPEHRNYDEDEPQQPVHSPFLCILIHEIGQNQPRNPPY.

This is an uncharacterized protein from Archaeoglobus fulgidus (strain ATCC 49558 / DSM 4304 / JCM 9628 / NBRC 100126 / VC-16).